Reading from the N-terminus, the 634-residue chain is Threonine--tRNA ligase (634 aa).

A TGS domain is found at 1 to 61 (MINIRFPDGS…NSNCELRLIT (61 aa)). Residues 241–532 (DHRKIGKVLD…LIEHYAGNLP (292 aa)) form a catalytic region. Cysteine 332, histidine 383, and histidine 509 together coordinate Zn(2+).

It belongs to the class-II aminoacyl-tRNA synthetase family. In terms of assembly, homodimer. Zn(2+) serves as cofactor.

It localises to the cytoplasm. It carries out the reaction tRNA(Thr) + L-threonine + ATP = L-threonyl-tRNA(Thr) + AMP + diphosphate + H(+). Catalyzes the attachment of threonine to tRNA(Thr) in a two-step reaction: L-threonine is first activated by ATP to form Thr-AMP and then transferred to the acceptor end of tRNA(Thr). Also edits incorrectly charged L-seryl-tRNA(Thr). The polypeptide is Threonine--tRNA ligase (Francisella tularensis subsp. mediasiatica (strain FSC147)).